Reading from the N-terminus, the 79-residue chain is Probable Fe(2+)-trafficking protein (79 aa).

Belongs to the Fe(2+)-trafficking protein family. Monomer.

In terms of biological role, could be a mediator in iron transactions between iron acquisition and iron-requiring processes, such as synthesis and/or repair of Fe-S clusters in biosynthetic enzymes. The sequence is that of Probable Fe(2+)-trafficking protein from Blochmanniella floridana.